Here is a 197-residue protein sequence, read N- to C-terminus: NADH-quinone oxidoreductase subunit C (197 aa).

Belongs to the complex I 30 kDa subunit family. As to quaternary structure, NDH-1 is composed of 14 different subunits. Subunits NuoB, C, D, E, F, and G constitute the peripheral sector of the complex.

It is found in the cell inner membrane. It catalyses the reaction a quinone + NADH + 5 H(+)(in) = a quinol + NAD(+) + 4 H(+)(out). Functionally, NDH-1 shuttles electrons from NADH, via FMN and iron-sulfur (Fe-S) centers, to quinones in the respiratory chain. The immediate electron acceptor for the enzyme in this species is believed to be ubiquinone. Couples the redox reaction to proton translocation (for every two electrons transferred, four hydrogen ions are translocated across the cytoplasmic membrane), and thus conserves the redox energy in a proton gradient. This is NADH-quinone oxidoreductase subunit C from Caulobacter vibrioides (strain ATCC 19089 / CIP 103742 / CB 15) (Caulobacter crescentus).